Reading from the N-terminus, the 219-residue chain is Probable oxidoreductase virH (219 aa).

Belongs to the oxidoreductase OpS7 family.

It participates in secondary metabolite biosynthesis. In terms of biological role, probable oxidoreductase; part of the gene cluster that mediates the biosynthesis of virensols and trichoxide, fungal natural products that contain or are derived from a salicylaldehyde core. The pathway begins with the synthesis of the reduced chain in virensol C by the highly reducing polyketide synthase virA via condensation of one acetate and 8 malonate units. VirA has interesting programming rules since the first 2 ketides are fully reduced, the 3 following ketides undergo beta-dehydration, and the last 3 ketides are only reduced to beta-hydroxys to yield the trihydroxy portion. The production of aldehyde virensol C by virA alone is surprising, since virA does not contain a reductase (R) domain that is typically associated with reductive product release in HRPKS. The cupin-domain enzyme virC is involved in enhancing virA product turnover. The short-chain dehydrogenase virB then oxidizes the C-7 alcohol of virensol C to a ketone, yielding virensol D. Virensol D is further transformed to salicylaldehyde 5-deoxyaurocitrin by the short-chain dehydrogenase virD. VirD catalyzes the dehydrogenation of C-3 to form the beta-ketone aldehyde, which is followed by the generation of the nucleophilic C-2 that is required for the intramolecular aldol condensation between C-2 and C-7, itself followed by dehydration and aromatization which leads to salicylaldehyde 5-deoxyaurocitrin. While the dehydrogenation of virensol D is definitely catalyzed by virD, the aldol condensation and dehydration may be uncatalyzed or assisted by virD. The short chain dehydrogenase virG then converts salicylaldehyde 5-deoxyaurocitrin into virensol B which is further hydroxylated by the cytochrome P450 monooxygenase virE to yield the hydroquinone virensol A. VirI then may oxidize virensol A to form the quinone, while virH performs the epoxidation. Finally, the two remaining short-chain dehydrogenases, virK and virL, are probably responsible for reducing the ketones to the corresponding alcohols to furnish the epoxycyclohexanol structure in trichoxide. This is Probable oxidoreductase virH from Hypocrea virens (strain Gv29-8 / FGSC 10586) (Gliocladium virens).